Here is a 365-residue protein sequence, read N- to C-terminus: tRNA-specific 2-thiouridylase MnmA (365 aa).

ATP contacts are provided by residues A6–S13 and L32. The Nucleophile role is filled by C101. A disulfide bridge links C101 with C199. G125 lines the ATP pocket. The interval K149–Q151 is interaction with tRNA. C199 acts as the Cysteine persulfide intermediate in catalysis.

It belongs to the MnmA/TRMU family.

The protein localises to the cytoplasm. The catalysed reaction is S-sulfanyl-L-cysteinyl-[protein] + uridine(34) in tRNA + AH2 + ATP = 2-thiouridine(34) in tRNA + L-cysteinyl-[protein] + A + AMP + diphosphate + H(+). Functionally, catalyzes the 2-thiolation of uridine at the wobble position (U34) of tRNA, leading to the formation of s(2)U34. The polypeptide is tRNA-specific 2-thiouridylase MnmA (Corynebacterium glutamicum (strain R)).